The chain runs to 294 residues: Type 4 apparatus protein DotZ (294 aa).

The T4BSS is a complex nanomachine composed of several subcomplexes. This subunit is part of the Type IV Coupling Complex (T4CC), a subcomplex composed of the DotLMNYZ core and the IcmSW-LvgA adapter subunits, linked by the C-terminal tail of DotL. Six DotLMNYZ hetero-pentameric units may assemble into a hexameric nanomachine, forming an inner membrane channel for effectors to pass through. Makes significant contact with DotN and DotY, but engages weakly with DotM and DotL. DotY and DotZ are co-dependent for the assembly into the T4CC.

It localises to the cytoplasm. In terms of biological role, component of the Dot/Icm type IVB secretion system (T4BSS), which is used to inject bacterial effector proteins into eukaryotic host cells. Part of a subcomplex which recruits effector proteins and delivers them to the core transmembrane subcomplex. DotY and DotZ play a role in effector translocation, but are not essential and do not influence the stability of the subcomplex main components. The DotY/DotZ main function is to optimize secretion by modulating the delivery trajectory of the IcmSW module and the localization of the machinery to the poles. The sequence is that of Type 4 apparatus protein DotZ from Legionella pneumophila subsp. pneumophila (strain Philadelphia 1 / ATCC 33152 / DSM 7513).